A 338-amino-acid polypeptide reads, in one-letter code: D-erythrose-4-phosphate dehydrogenase (338 aa).

12–13 lines the NAD(+) pocket; sequence RI. Residues 154–156, Arg200, 213–214, and Arg236 each bind substrate; these read SCT and TK. The active-site Nucleophile is Cys155. Asn318 contacts NAD(+).

This sequence belongs to the glyceraldehyde-3-phosphate dehydrogenase family. Epd subfamily. As to quaternary structure, homotetramer.

It localises to the cytoplasm. It carries out the reaction D-erythrose 4-phosphate + NAD(+) + H2O = 4-phospho-D-erythronate + NADH + 2 H(+). Its pathway is cofactor biosynthesis; pyridoxine 5'-phosphate biosynthesis; pyridoxine 5'-phosphate from D-erythrose 4-phosphate: step 1/5. In terms of biological role, catalyzes the NAD-dependent conversion of D-erythrose 4-phosphate to 4-phosphoerythronate. In Tolumonas auensis (strain DSM 9187 / NBRC 110442 / TA 4), this protein is D-erythrose-4-phosphate dehydrogenase.